The primary structure comprises 771 residues: Endoplasmin homolog (771 aa).

A signal peptide spans 1-24; that stretch reads MANSSLLRVVLVALLLLGSVTVSA. ATP-binding residues include Asn-63, Asp-109, and Phe-160. N-linked (GlcNAc...) asparagine glycosylation is present at Asn-63. Residues 254–282 form a disordered region; sequence AATPESAAEERSLDEGAVEEDPDKEGDTQ. Residues Asn-306 and Asn-402 are each glycosylated (N-linked (GlcNAc...) asparagine). The segment at 727–771 is disordered; sequence ADDSLLPPDDAEYTVSDTETEEEEEQPKVDTNAHEEAETDGEGDL. Residues 752–762 are compositionally biased toward basic and acidic residues; the sequence is QPKVDTNAHEE. The Prevents secretion from ER motif lies at 768–771; the sequence is EGDL.

This sequence belongs to the heat shock protein 90 family. Homotetramer.

It is found in the endoplasmic reticulum. In terms of biological role, molecular chaperone that functions in the processing and transport of secreted proteins. Required for the synthesis of lipophosphoglycan (LPG), a cell surface glycoconjugate. Necessary for the attachment of the galactosyl residue to the mannose within the phosphoglycan repeats of the nascent LPG chain. Also required for addition of phosphoglycan to acid phosphatase. Not required for normal growth. Has ATPase activity. Binds heparin with micromolar affinity which may facilitate infection of host cells. The sequence is that of Endoplasmin homolog from Leishmania donovani.